We begin with the raw amino-acid sequence, 312 residues long: Taste receptor type 2 member 103 (312 aa).

The Extracellular portion of the chain corresponds to 1–16 (MVVTMRAALRLMLIST). Residues 17-37 (VSLELIIGILANVFIALVNII) form a helical membrane-spanning segment. Residues 38 to 65 (DWIKRGKISAVDKIYMGLAISRTAFVLS) are Cytoplasmic-facing. The chain crosses the membrane as a helical span at residues 66 to 86 (VITGFLIAFLDPASLGIGIMI). The Extracellular segment spans residues 87 to 92 (RLLTMS). The helical transmembrane segment at 93-113 (WTVTNHFSVWFATCLSIFYFL) threads the bilayer. Residues 114-133 (KITNFSNTVFLALKWKVKKV) are Cytoplasmic-facing. Residues 134-154 (VSVTLVVSLIILFINVIVIHI) form a helical membrane-spanning segment. Residues 155–184 (YTDRFQVNMVQKCGANNTLRAYGLFLSIST) lie on the Extracellular side of the membrane. N-linked (GlcNAc...) asparagine glycosylation is present at N170. Residues 185-205 (VFTFIPFTASLTMFLLLIFSL) traverse the membrane as a helical segment. The Cytoplasmic segment spans residues 206–229 (WRHLKTMHHNATGSRDVSTVAHIK). Residues 230–250 (GLQTVVAFLLLYTVFAMSLFS) traverse the membrane as a helical segment. The Extracellular portion of the chain corresponds to 251–264 (QSLSIDAQHTNLLS). The helical transmembrane segment at 265–285 (HFLRCIGVAFPSGHSCALILG) threads the bilayer. Residues 286-312 (NNKLRQASLSVIFWLRCKYKHTENQGP) lie on the Cytoplasmic side of the membrane.

The protein belongs to the G-protein coupled receptor T2R family.

The protein localises to the membrane. Functionally, gustducin-coupled receptor implicated in the perception of bitter compounds in the oral cavity and the gastrointestinal tract. Signals through PLCB2 and the calcium-regulated cation channel TRPM5. The polypeptide is Taste receptor type 2 member 103 (Rattus norvegicus (Rat)).